The sequence spans 263 residues: Very long chain fatty acid elongase F (263 aa).

7 helical membrane-spanning segments follow: residues 10–30, 55–75, 98–118, 135–155, 159–179, 193–213, and 223–243; these read IPVFSDPWITMATLSGYLLFV, IFQILYNGLILVLGVHFLFVL, LICILYMLNKFVDLVETIFFV, FAMAFLGYLYYYFHGYGGVAF, LCLLNTAVHVIMYAYYYLSSI, ITIAQLVQFGIILLHCTITLA, and LTYGCGSLSAFFAVIFSQFYY.

It belongs to the ELO family. In terms of tissue distribution, no expression in adults.

The protein resides in the endoplasmic reticulum membrane. It catalyses the reaction a very-long-chain acyl-CoA + malonyl-CoA + H(+) = a very-long-chain 3-oxoacyl-CoA + CO2 + CoA. Its function is as follows. Condensing enzyme that elongates saturated and monounsaturated very long chain fatty acids, to yield products up to 30 carbons in length. In Drosophila simulans (Fruit fly), this protein is Very long chain fatty acid elongase F.